A 242-amino-acid polypeptide reads, in one-letter code: 7-cyano-7-deazaguanine synthase (242 aa).

12-22 (FSGGQDSATCL) is a binding site for ATP. The Zn(2+) site is built by Cys-200, Cys-215, Cys-218, and Cys-221.

The protein belongs to the QueC family. Zn(2+) is required as a cofactor.

It carries out the reaction 7-carboxy-7-deazaguanine + NH4(+) + ATP = 7-cyano-7-deazaguanine + ADP + phosphate + H2O + H(+). Its pathway is purine metabolism; 7-cyano-7-deazaguanine biosynthesis. Functionally, catalyzes the ATP-dependent conversion of 7-carboxy-7-deazaguanine (CDG) to 7-cyano-7-deazaguanine (preQ(0)). The sequence is that of 7-cyano-7-deazaguanine synthase from Gluconobacter oxydans (strain 621H) (Gluconobacter suboxydans).